The primary structure comprises 74 residues: Kappa-scoloptoxin(07)-Ssm2f (74 aa).

A signal peptide spans 1–19; the sequence is MLVFYAILFVTVFSNTVMG. Residues 20–41 constitute a propeptide that is removed on maturation; it reads ATIDKPIPKPIFREAIEEMEVN.

It belongs to the scoloptoxin-07 family. In terms of processing, contains 3 disulfide bonds. In terms of tissue distribution, expressed by the venom gland.

The protein resides in the secreted. Its function is as follows. Inhibits voltage-gated potassium channels. The chain is Kappa-scoloptoxin(07)-Ssm2f from Scolopendra mutilans (Chinese red-headed centipede).